The chain runs to 251 residues: SNAP25 homologous protein SNAP29 (251 aa).

Residues 1-52 are disordered; sequence MAPKNSSWNPFDDEKEAAKSFSLNPFDDDDDDKEVEKRFTSSLKPSGGKENQ. Over residues 40–52 the composition is skewed to polar residues; it reads TSSLKPSGGKENQ. One can recognise a t-SNARE coiled-coil homology domain in the interval 186 to 248; that stretch reads KTQIAKQDEA…KQSNQRARYL (63 aa).

It belongs to the SNAP-25 family.

The protein localises to the membrane. It localises to the cytoplasm. SNAREs, soluble N-ethylmaleimide-sensitive factor-attachment protein receptors, are essential proteins for fusion of cellular membranes. SNAREs localized on opposing membranes assemble to form a trans-SNARE complex, an extended, parallel four alpha-helical bundle that drives membrane fusion. In Arabidopsis thaliana (Mouse-ear cress), this protein is SNAP25 homologous protein SNAP29 (SNAP29).